Reading from the N-terminus, the 400-residue chain is CinA-like protein (400 aa).

This sequence belongs to the CinA family.

This is CinA-like protein from Escherichia coli (strain 55989 / EAEC).